The sequence spans 619 residues: UPF0329 protein ECU08_2070 (619 aa).

2 stretches are compositionally biased toward basic and acidic residues: residues E350 to G359 and G369 to E385. The segment at E350 to H425 is disordered. The segment covering E386 to A396 has biased composition (acidic residues).

It belongs to the UPF0329 family.

The protein is UPF0329 protein ECU08_2070 of Encephalitozoon cuniculi (strain GB-M1) (Microsporidian parasite).